A 349-amino-acid chain; its full sequence is Fructose-1,6-bisphosphatase class 1 (349 aa).

Mg(2+) is bound by residues E92, D113, L115, and D116. Substrate is bound by residues 116–119, N209, Y242, and K272; that span reads DGSS. E278 lines the Mg(2+) pocket.

Belongs to the FBPase class 1 family. In terms of assembly, homotetramer. Mg(2+) serves as cofactor.

It localises to the cytoplasm. The catalysed reaction is beta-D-fructose 1,6-bisphosphate + H2O = beta-D-fructose 6-phosphate + phosphate. It participates in carbohydrate biosynthesis; Calvin cycle. In Chloroherpeton thalassium (strain ATCC 35110 / GB-78), this protein is Fructose-1,6-bisphosphatase class 1.